The primary structure comprises 540 residues: Glucose-6-phosphate isomerase (540 aa).

The active-site Proton donor is Glu346. Residues His377 and Lys505 contribute to the active site.

This sequence belongs to the GPI family.

Its subcellular location is the cytoplasm. The catalysed reaction is alpha-D-glucose 6-phosphate = beta-D-fructose 6-phosphate. The protein operates within carbohydrate biosynthesis; gluconeogenesis. It participates in carbohydrate degradation; glycolysis; D-glyceraldehyde 3-phosphate and glycerone phosphate from D-glucose: step 2/4. Its function is as follows. Catalyzes the reversible isomerization of glucose-6-phosphate to fructose-6-phosphate. This chain is Glucose-6-phosphate isomerase, found in Francisella philomiragia subsp. philomiragia (strain ATCC 25017 / CCUG 19701 / FSC 153 / O#319-036).